Consider the following 452-residue polypeptide: tRNA modification GTPase MnmE (452 aa).

Residues R21, E78, and K118 each coordinate (6S)-5-formyl-5,6,7,8-tetrahydrofolate. One can recognise a TrmE-type G domain in the interval 214–375 (GMKVVIAGRP…LREHLKKSMG (162 aa)). N224 is a K(+) binding site. GTP is bound by residues 224–229 (NAGKSS), 243–249 (TNIAGTT), and 268–271 (DTAG). Mg(2+) is bound at residue S228. Positions 243, 245, and 248 each coordinate K(+). T249 is a binding site for Mg(2+). K452 is a (6S)-5-formyl-5,6,7,8-tetrahydrofolate binding site.

It belongs to the TRAFAC class TrmE-Era-EngA-EngB-Septin-like GTPase superfamily. TrmE GTPase family. Homodimer. Heterotetramer of two MnmE and two MnmG subunits. It depends on K(+) as a cofactor.

It localises to the cytoplasm. Functionally, exhibits a very high intrinsic GTPase hydrolysis rate. Involved in the addition of a carboxymethylaminomethyl (cmnm) group at the wobble position (U34) of certain tRNAs, forming tRNA-cmnm(5)s(2)U34. This Actinobacillus pleuropneumoniae serotype 3 (strain JL03) protein is tRNA modification GTPase MnmE.